The chain runs to 84 residues: UPF0248 protein PF1300 (84 aa).

The protein belongs to the UPF0248 family.

The chain is UPF0248 protein PF1300 from Pyrococcus furiosus (strain ATCC 43587 / DSM 3638 / JCM 8422 / Vc1).